We begin with the raw amino-acid sequence, 537 residues long: Tyrosine-protein kinase Yes (537 aa).

The segment covering 1–22 (MGCIKSKEDKGPSIKYRTEPKP) has biased composition (basic and acidic residues). The segment at 1-60 (MGCIKSKEDKGPSIKYRTEPKPDPGSQYGADPTQATQSPGIKGPAPNFNSHSMTPFGGSS) is disordered. Gly2 carries the N-myristoyl glycine lipid modification. The S-palmitoyl cysteine; in membrane form moiety is linked to residue Cys3. Residues 85-146 (GGVTVFVALY…PSNYVAPADS (62 aa)) enclose the SH3 domain. The SH2 domain occupies 152 to 249 (WYFGKMGRKD…GLCYRLTTVC (98 aa)). Residues 271-524 (LRLDVKLGQG…YIQSFLEDYF (254 aa)) form the Protein kinase domain. Residues 277–285 (LGQGCFGEV) and Lys299 each bind ATP. The Proton acceptor role is filled by Asp390. Tyr420 carries the phosphotyrosine; by autocatalysis modification. Phosphotyrosine; by CSK is present on Tyr531.

Belongs to the protein kinase superfamily. Tyr protein kinase family. SRC subfamily. Autophosphorylated at Tyr-420 inducing activation. Post-translationally, palmitoylation at Cys-3 promotes membrane localization.

It localises to the cell membrane. Its subcellular location is the cytoplasm. The protein resides in the cytoskeleton. It is found in the microtubule organizing center. The protein localises to the centrosome. It localises to the cytosol. Its subcellular location is the cell junction. It carries out the reaction L-tyrosyl-[protein] + ATP = O-phospho-L-tyrosyl-[protein] + ADP + H(+). In terms of biological role, non-receptor protein tyrosine kinase that is involved in the regulation of cell growth and survival, apoptosis, cell-cell adhesion, cytoskeleton remodeling, differentiation, G2/M progression and cytokinesis. This is Tyrosine-protein kinase Yes (yes1) from Xenopus laevis (African clawed frog).